Reading from the N-terminus, the 326-residue chain is Vitamin B12 import system permease protein BtuC (326 aa).

9 helical membrane passes run 15–35 (WLLC…CAGE), 61–81 (LAVL…QALF), 88–108 (PGLL…VLLG), 112–132 (LPNW…TLIL), 146–166 (LLAG…AIYF), 184–204 (GGVD…LLWI), 240–260 (GWMV…GLVI), 274–294 (VLLP…DVVA), and 302–322 (ELPI…WLLL).

It belongs to the binding-protein-dependent transport system permease family. FecCD subfamily. In terms of assembly, the complex is composed of two ATP-binding proteins (BtuD), two transmembrane proteins (BtuC) and a solute-binding protein (BtuF).

The protein localises to the cell inner membrane. Its function is as follows. Part of the ABC transporter complex BtuCDF involved in vitamin B12 import. Involved in the translocation of the substrate across the membrane. This chain is Vitamin B12 import system permease protein BtuC, found in Escherichia coli (strain SE11).